Reading from the N-terminus, the 609-residue chain is Protein kinase PVPK-1 (609 aa).

The segment covering 1–19 (MESSVNGVDSLSEVQNSVS) has biased composition (polar residues). 2 disordered regions span residues 1–51 (MESS…GHQT) and 80–100 (PTKL…EPNG). The Protein kinase domain maps to 229-565 (FRLLKKLGCG…ATEIKQHPFF (337 aa)). ATP contacts are provided by residues 235 to 243 (LGCGDIGSV) and K258. D354 acts as the Proton acceptor in catalysis. The interval 429–448 (GKSKKDKKSKPKNDMHNQVT) is disordered.

The protein belongs to the protein kinase superfamily. Ser/Thr protein kinase family.

It carries out the reaction L-seryl-[protein] + ATP = O-phospho-L-seryl-[protein] + ADP + H(+). The enzyme catalyses L-threonyl-[protein] + ATP = O-phospho-L-threonyl-[protein] + ADP + H(+). This chain is Protein kinase PVPK-1, found in Phaseolus vulgaris (Kidney bean).